Consider the following 273-residue polypeptide: Peroxiredoxin-4 (273 aa).

An N-terminal signal peptide occupies residues 1–40; sequence METWSKLLDGTTPSRRWRKLVLLLPPLLLFLLQTEALQGL. The Thioredoxin domain maps to 81-239; sequence AKISKPAPYW…TLRLVQAFQY (159 aa). Catalysis depends on C126, which acts as the Cysteine sulfenic acid (-SOH) intermediate.

The protein belongs to the peroxiredoxin family. AhpC/Prx1 subfamily. Homodimer; disulfide-linked, upon oxidation. 5 homodimers assemble to form a ring-like decamer. In terms of processing, the enzyme can be inactivated by further oxidation of the cysteine sulfenic acid (C(P)-SOH) to sulphinic acid (C(P)-SO2H) and sulphonic acid (C(P)-SO3H) instead of its condensation to a disulfide bond.

It localises to the cytoplasm. Its subcellular location is the endoplasmic reticulum. The protein localises to the secreted. It catalyses the reaction a hydroperoxide + [thioredoxin]-dithiol = an alcohol + [thioredoxin]-disulfide + H2O. Thiol-specific peroxidase that catalyzes the reduction of hydrogen peroxide and organic hydroperoxides to water and alcohols, respectively. Plays a role in cell protection against oxidative stress by detoxifying peroxides and as sensor of hydrogen peroxide-mediated signaling events. Regulates the activation of NF-kappa-B in the cytosol by a modulation of I-kappa-B-alpha phosphorylation. The chain is Peroxiredoxin-4 (Prdx4) from Rattus norvegicus (Rat).